The following is a 315-amino-acid chain: N-acetyl-D-glutamate racemase (315 aa).

Positions 147, 173, and 196 each coordinate Mg(2+).

Belongs to the mandelate racemase/muconate lactonizing enzyme family. Mg(2+) is required as a cofactor.

The catalysed reaction is N-acetyl-D-glutamate = N-acetyl-L-glutamate. It functions in the pathway amino-acid degradation. In terms of biological role, racemase involved in a deamination-independent D-glutamate degradation pathway, named the DgcN-DgcA pathway. Catalyzes the conversion of N-acetyl-D-glutamate to N-acetyl-L-glutamate. Also shows racemase activity towards the dipeptide L-Ala-D-Glu, a key constituent of peptidoglycan muropeptides, suggesting that it may also contribute to the degradation of peptidoglycans. This is N-acetyl-D-glutamate racemase from Pseudoalteromonas sp.